Here is a 207-residue protein sequence, read N- to C-terminus: MPKVDLYNMKGEVVGDIQLSDNVFGTDVNKDALHAVVVNQLANRRQGTQSTKTKSEVRGGGKKPWRQKGTGRARQGSIRSAQWVKGGIVLGPKPRSYRYTLPKKVKRIAMKSALTSKVSGNEIFVLDALALDAIKTKSMVGVLNNLKVDSSALLVIDSKNENIVKSARNIPGIKTAYVNTLNVFDILKYDKFIITKDAVEKVEEVYA.

A disordered region spans residues 44–76 (RRQGTQSTKTKSEVRGGGKKPWRQKGTGRARQG). Residues 60 to 71 (GGKKPWRQKGTG) are compositionally biased toward basic residues.

Belongs to the universal ribosomal protein uL4 family. Part of the 50S ribosomal subunit.

One of the primary rRNA binding proteins, this protein initially binds near the 5'-end of the 23S rRNA. It is important during the early stages of 50S assembly. It makes multiple contacts with different domains of the 23S rRNA in the assembled 50S subunit and ribosome. In terms of biological role, forms part of the polypeptide exit tunnel. In Ruminiclostridium cellulolyticum (strain ATCC 35319 / DSM 5812 / JCM 6584 / H10) (Clostridium cellulolyticum), this protein is Large ribosomal subunit protein uL4.